A 54-amino-acid polypeptide reads, in one-letter code: uncharacterized protein (54 aa).

This is an uncharacterized protein from Bacillus subtilis (strain 168).